We begin with the raw amino-acid sequence, 598 residues long: MNELIKHKLELLPDSPGCYLHKDKEGTIIYVGKAKNLKKRVRSYFRGSHDTKTELLVSEIVDFEYIVTESDTEALLLEINLIQKNMPKYNIKLKDDKSYPFLKITNESFPRLVITRYIKKNDGLYFGPYPDSYTANEVKKLLDRIFPFKKCKNPINKVCFYYHLGQCCAHTICHTDKAYWDRLIDDVKHFLNGKDDKIIEDLRSKMLAASEEMAFERAAEYRDLISGIATMRTKQRVMSKDLQDRDIFGYYVDKGWMCVQVFFVRQGKLIQRDVNLFPYYNDAEEDFLTYMGQFYQDKQHFIPKEVFIPEAIDEELVAAIVPTKIIKPKRGEKKQLVALATKNARVSLQQKFDLLEKDIKKTSGAIDNLGHLLGINKPVRIEAFDNSNIQGTSPVAAMVVFVDGKPSKKDYRKFKIKTVVGPDDYASMREVLFRRYSRVKKEGLQAPNLIIVDGGVGQVNVAKDVIEKQLGLTIPVAGLQKNDKHQTHDLLFGNPLEVVPLPRRSEEFFLLHRIQDEVHRFAVTFHRQVRRKNSFSSTLDHISGLGPKRKQLLLRHFKTITAIASATSEEIQALGIPKTVVEAIQQQITDNKNDRSSP.

In terms of domain architecture, GIY-YIG spans 14-91 (DSPGCYLHKD…IQKNMPKYNI (78 aa)). In terms of domain architecture, UVR spans 196 to 231 (DKIIEDLRSKMLAASEEMAFERAAEYRDLISGIATM).

Belongs to the UvrC family. As to quaternary structure, interacts with UvrB in an incision complex.

Its subcellular location is the cytoplasm. The UvrABC repair system catalyzes the recognition and processing of DNA lesions. UvrC both incises the 5' and 3' sides of the lesion. The N-terminal half is responsible for the 3' incision and the C-terminal half is responsible for the 5' incision. The chain is UvrABC system protein C from Streptococcus pyogenes serotype M5 (strain Manfredo).